A 140-amino-acid polypeptide reads, in one-letter code: Large ribosomal subunit protein bL17 (140 aa).

The protein belongs to the bacterial ribosomal protein bL17 family. As to quaternary structure, part of the 50S ribosomal subunit. Contacts protein L32.

The protein is Large ribosomal subunit protein bL17 of Rhizobium etli (strain CIAT 652).